The sequence spans 39 residues: Photosystem II reaction center protein L (39 aa).

The helical transmembrane segment at 16-37 (RTSLYLGLLLVAVLGILFSSYF) threads the bilayer.

Belongs to the PsbL family. In terms of assembly, PSII is composed of 1 copy each of membrane proteins PsbA, PsbB, PsbC, PsbD, PsbE, PsbF, PsbH, PsbI, PsbJ, PsbK, PsbL, PsbM, PsbT, PsbX, PsbY, PsbZ, Psb30/Ycf12, peripheral proteins PsbO, CyanoQ (PsbQ), PsbU, PsbV and a large number of cofactors. It forms dimeric complexes.

It is found in the cellular thylakoid membrane. One of the components of the core complex of photosystem II (PSII). PSII is a light-driven water:plastoquinone oxidoreductase that uses light energy to abstract electrons from H(2)O, generating O(2) and a proton gradient subsequently used for ATP formation. It consists of a core antenna complex that captures photons, and an electron transfer chain that converts photonic excitation into a charge separation. This subunit is found at the monomer-monomer interface and is required for correct PSII assembly and/or dimerization. Required for PSII activity, at least in part due to its effects on PSII assembly. May make specific contact(s) with lipids. This chain is Photosystem II reaction center protein L, found in Synechocystis sp. (strain ATCC 27184 / PCC 6803 / Kazusa).